Consider the following 1791-residue polypeptide: Sodium channel protein type 11 subunit alpha (1791 aa).

The Cytoplasmic portion of the chain corresponds to 1-126 (MDDRCYPVIF…SIRSLAIRVS (126 aa)). Residues 115-408 (FNSIRSLAIR…VTMAYEEQNK (294 aa)) form an I repeat. A helical transmembrane segment spans residues 127 to 148 (VHSLFSMFIIGTVIINCVFMAT). Residues 149–156 (GPAKNSNS) lie on the Extracellular side of the membrane. Residues 157–180 (NNTDIAECVFTGIYIFEALIKILA) form a helical membrane-spanning segment. Residues 181 to 192 (RGFILDEFSFLR) are Cytoplasmic-facing. Residues 193–212 (DPWNWLDSIVIGIAIVSYIP) traverse the membrane as a helical segment. Residues 213–219 (GITIKLL) lie on the Extracellular side of the membrane. The chain crosses the membrane as a helical; Voltage-sensor span at residues 220 to 239 (PLRTFRVFRALKAISVVSRL). The Cytoplasmic segment spans residues 240 to 255 (KVIVGALLRSVKKLVN). The helical transmembrane segment at 256–269 (VIILTFFCLSIFAL) threads the bilayer. Over 270-344 (VGQQLFMGSL…PDYNYTNFDN (75 aa)) the chain is Extracellular. Cys-283 and Cys-322 are disulfide-bonded. Asn-290 and Asn-338 each carry an N-linked (GlcNAc...) asparagine glycan. Positions 345–369 (FGWSFLAMFRLMTQDSWEKLYQQTL) form an intramembrane region, pore-forming. Residues 370 to 376 (RTTGLYS) lie on the Extracellular side of the membrane. The helical transmembrane segment at 377–402 (VFFFIVVIFLGSFYLINLTLAVVTMA) threads the bilayer. The Cytoplasmic segment spans residues 403 to 572 (YEEQNKNVAA…WLCVKKVLRT (170 aa)). Residues 559–833 (CCPQWLCVKK…EGEARKTKVQ (275 aa)) form an II repeat. The helical transmembrane segment at 573–596 (VMTDPFTELAITICIIINTVFLAM) threads the bilayer. Topologically, residues 597 to 607 (EHHKMEASFEK) are extracellular. Residues 608 to 631 (MLNIGNLVFTSIFIAEMCLKIIAL) traverse the membrane as a helical segment. Residues 632–639 (DPYHYFRR) are Cytoplasmic-facing. Residues 640–659 (GWNIFDSIVALLSFADVMNC) traverse the membrane as a helical segment. At 660–667 (VLQKRSWP) the chain is on the extracellular side. A helical; Voltage-sensor transmembrane segment spans residues 668–687 (FLRSFRVLRVFKLAKSWPTL). The Cytoplasmic segment spans residues 688 to 702 (NTLIKIIGNSVGALG). Residues 703–725 (SLTVVLVIVIFIFSVVGMQLFGR) traverse the membrane as a helical segment. Residues 726–753 (SFNSQKSPKLCNPTGPTVSCLRHWHMGD) lie on the Extracellular side of the membrane. Positions 754–774 (FWHSFLVVFRILCGEWIENMW) form an intramembrane region, pore-forming. Residues 775–785 (ECMQEANASSS) are Extracellular-facing. Cys-776 and Cys-787 are joined by a disulfide. N-linked (GlcNAc...) asparagine glycosylation is present at Asn-781. A helical transmembrane segment spans residues 786 to 811 (LCVIVFILITVIGKLVVLNLFIALLL). At 812–1051 (NSFSNEERNG…WWNLRKTCYQ (240 aa)) the chain is on the cytoplasmic side. An III repeat occupies 1044–1339 (NLRKTCYQIV…KKYYNAMKKL (296 aa)). A helical membrane pass occupies residues 1052–1074 (IVKHSWFESFIIFVILLSSGALI). The Extracellular portion of the chain corresponds to 1075 to 1088 (FEDVHLENQPKIQE). A helical membrane pass occupies residues 1089-1114 (LLNCTDIIFTHIFILEMVLKWVAFGF). Over 1115-1120 (GKYFTS) the chain is Cytoplasmic. A helical transmembrane segment spans residues 1121 to 1138 (AWCCLDFIIVIVSVTTLI). A topological domain (extracellular) is located at residue Asn-1139. A helical; Voltage-sensor transmembrane segment spans residues 1140–1161 (LMELKSFRTLRALRPLRALSQF). Over 1162-1180 (EGMKVVVNALIGAIPAILN) the chain is Cytoplasmic. A helical membrane pass occupies residues 1181-1202 (VLLVCLIFWLVFCILGVYFFSG). Over 1203–1243 (KFGKCINGTDSVINYTIITNKSQCESGNFSWINQKVNFDNV) the chain is Extracellular. 4 N-linked (GlcNAc...) asparagine glycosylation sites follow: Asn-1209, Asn-1216, Asn-1222, and Asn-1230. The segment at residues 1244–1265 (GNAYLALLQVATFKGWMDIIYA) is an intramembrane region (pore-forming). The Extracellular portion of the chain corresponds to 1266–1281 (AVDSTEKEQQPEFESN). The helical transmembrane segment at 1282 to 1308 (SLGYIYFVVFIIFGSFFTLNLFIGVII) threads the bilayer. At 1309–1361 (DNFNQQQKKLGGQDIFMTEEQKKYYNAMKKLGSKKPQKPIPRPLNKCQGLVFD) the chain is on the cytoplasmic side. Residues 1348 to 1639 (IPRPLNKCQG…WEKFDPEATQ (292 aa)) form an IV repeat. A helical transmembrane segment spans residues 1362–1385 (IVTSQIFDIIIISLIILNMISMMA). At 1386-1396 (ESYNQPKAMKS) the chain is on the extracellular side. Residues 1397-1420 (ILDHLNWVFVVIFTLECLIKIFAL) traverse the membrane as a helical segment. Over 1421 to 1426 (RQYYFT) the chain is Cytoplasmic. A helical membrane pass occupies residues 1427-1450 (NGWNLFDCVVVLLSIVSTMISTLE). At 1451–1461 (NQEHIPFPPTL) the chain is on the extracellular side. The chain crosses the membrane as a helical; Voltage-sensor span at residues 1462 to 1484 (FRIVRLARIGRILRLVRAARGIR). Topologically, residues 1485–1499 (TLLFALMMSLPSLFN) are cytoplasmic. The helical transmembrane segment at 1500–1522 (IGLLLFLIMFIYAILGMNWFSKV) threads the bilayer. The Extracellular segment spans residues 1523–1536 (NPESGIDDIFNFKT). An intramembrane region (pore-forming) is located at residues 1537–1559 (FASSMLCLFQISTSAGWDSLLSP). Residues 1560–1579 (MLRSKESCNSSSENCHLPGI) are Extracellular-facing. The N-linked (GlcNAc...) asparagine glycan is linked to Asn-1568. Residues 1580-1604 (ATSYFVSYIIISFLIVVNMYIAVIL) traverse the membrane as a helical segment. Over 1605-1791 (ENFNTATEES…GVAKGKVHCD (187 aa)) the chain is Cytoplasmic.

This sequence belongs to the sodium channel (TC 1.A.1.10) family. Nav1.9/SCN11A subfamily. As to quaternary structure, the voltage-resistant sodium channel consists of an ion conducting pore forming alpha-subunit regulated by one or more auxiliary subunits SCN1B, SCN2B and SCN3B. Expressed in the dorsal root ganglia and trigeminal ganglia, olfactory bulb, hippocampus, cerebellar cortex, spinal cord, spleen, small intestine and placenta.

The protein resides in the cell membrane. It catalyses the reaction Na(+)(in) = Na(+)(out). Its activity is regulated as follows. Activity is not sensitive to inhibition by tetrodotoxin. In terms of biological role, sodium channel mediating the voltage-dependent sodium ion permeability of excitable membranes. Assuming opened or closed conformations in response to the voltage difference across the membrane, the protein forms a sodium-selective channel through which sodium ions may pass in accordance with their electrochemical gradient. Involved in membrane depolarization during action potential in nociceptors which function as key relay stations for the electrical transmission of pain signals from the periphery to the central nervous system. Also involved in rapid BDNF-evoked neuronal depolarization. The chain is Sodium channel protein type 11 subunit alpha from Homo sapiens (Human).